A 451-amino-acid polypeptide reads, in one-letter code: Inositol-pentakisphosphate 2-kinase (451 aa).

M1 bears the N-acetylmethionine mark. ATP contacts are provided by residues G19–N22 and R40. Positions 45 and 130 each coordinate substrate. Residues N147–H149 and E166–K168 each bind ATP. Positions E166–K170 match the EXKPK motif motif. The substrate site is built by K170, K200, and N238. R241 contacts ATP. Positions 320, 330, 333, and 346 each coordinate Zn(2+). Residue D368 participates in substrate binding. D407 is an ATP binding site. Residues K411, R415, and Y419 each contribute to the substrate site.

This sequence belongs to the IPK1 type 2 family. It depends on Zn(2+) as a cofactor. As to expression, strongly expressed in leaves and cauline leaves. Weakly expressed in siliques and flowers. In flower, it is expressed in the major organs of developing flower buds. Strongly expressed in sepals, petals, in the male and female organs of immature and mature flower buds. Strongly expressed in the gynoecium and carpels which are fused to form the gynoecium. Also expressed in the transmitting tissue and ovules.

The enzyme catalyses 1D-myo-inositol 1,3,4,5,6-pentakisphosphate + ATP = 1D-myo-inositol hexakisphosphate + ADP + H(+). Phosphorylates Ins(1,3,4,5,6)P5 at position 2 to form Ins(1,2,3,4,5,6)P6 (InsP6 or phytate). Phytate is a regulator of intracellular signaling, a highly abundant animal antinutrient, and a phosphate store in plant seeds. Also phosphorylates Ins(1,3,4,6)P4 and Ins(1,4,5,6)P4 to produce Ins(1,2,3,4,6)P5 and Ins(1,2,4,5,6)P5. The protein is Inositol-pentakisphosphate 2-kinase (IPK1) of Arabidopsis thaliana (Mouse-ear cress).